Here is a 581-residue protein sequence, read N- to C-terminus: MSHATDSTLDNASVDSEKVRDFGDDLQNHPVQPTRSILSKIRSRDDDARSLVSNNKGVERIISDLQEGAGQLGPLEQPYDIKKIETHPDPHTDYNEADPWKYPIDSESGLRLVEWVDGDKHNPKNISKAKKWLYTLVLGAVCFVVALGSAIVTGDMERPAEYFGVSEEVIILASVTVFVIGFGVGPLVFAPMSEEVGRKPIYVVTLFIAVVFIVPCGAAKNIATLIVCRLIDGIAFSAPMTLIGGSLADIWEGPERGTAMAIFSAAPFLGPVCGPIFGGLLCDHAPTWRWIYWTFLIVAGVFYAIFIAIVPETHHGILLKKRAKKLRKETGDSRYRSFNELQIRSFGEVAKTSLLRPFVLLSELIVFLMTIYMAICYGLLYMFFFAYPVVYQQGKGWSASLTGVMFIPIGVGVIIATIAAPFFNKDYNRRAQVYRDRGELPPPELRLIPMMIACWFVPVGLFAFAWSSYTWVSWAGPCFSGLAAGFGFCCLYNPANNYIVDSYQHYAASALAAKTFVRSIWGACVPLFTIQMYHRLGDQWATSLMAFISLACCAIPYLFFFFGARVRTFSRYAYTPETNTK.

Over residues 1–14 (MSHATDSTLDNASV) the composition is skewed to polar residues. Residues 1–43 (MSHATDSTLDNASVDSEKVRDFGDDLQNHPVQPTRSILSKIRS) form a disordered region. Residue Asn-11 is glycosylated (N-linked (GlcNAc...) asparagine). Over residues 15–27 (DSEKVRDFGDDLQ) the composition is skewed to basic and acidic residues. The N-linked (GlcNAc...) asparagine glycan is linked to Asn-125. 12 helical membrane-spanning segments follow: residues 132–152 (WLYTLVLGAVCFVVALGSAIV), 169–189 (VIILASVTVFVIGFGVGPLVF), 199–219 (KPIYVVTLFIAVVFIVPCGAA), 230–250 (LIDGIAFSAPMTLIGGSLADI), 261–281 (AIFSAAPFLGPVCGPIFGGLL), 290–310 (WIYWTFLIVAGVFYAIFIAIV), 365–385 (IVFLMTIYMAICYGLLYMFFF), 403–423 (GVMFIPIGVGVIIATIAAPFF), 447–467 (LIPMMIACWFVPVGLFAFAWS), 471–491 (WVSWAGPCFSGLAAGFGFCCL), 510–530 (ALAAKTFVRSIWGACVPLFTI), and 544–564 (LMAFISLACCAIPYLFFFFGA).

This sequence belongs to the major facilitator superfamily. DHA1 family. Polyamines/proton antiporter (TC 2.A.1.2.16) subfamily.

The protein localises to the cell membrane. Its function is as follows. MFS transporter involved in N-acetylglucosamine (GlcNAc) uptake. Confers resistance to cycloheximide, 4-nitroquinoline-N-oxide, and 1,10-phenanthroline, and contributes to virulence. This chain is Major facilitator superfamily multidrug transporter NAG4, found in Candida albicans (strain SC5314 / ATCC MYA-2876) (Yeast).